The chain runs to 359 residues: Trans-enoyl reductase RAP1 (359 aa).

49–52 (CDFK) serves as a coordination point for NADP(+). Substrate is bound at residue 137 to 144 (TCIATACM). NADP(+) contacts are provided by residues 195-198 (SPKN), Tyr213, and 260-261 (LE). Residue 281–285 (GQMIL) participates in substrate binding. Residue 350 to 351 (VA) coordinates NADP(+).

This sequence belongs to the zinc-containing alcohol dehydrogenase family. As to quaternary structure, monomer.

The protein operates within secondary metabolite biosynthesis. In terms of biological role, trans-enoyl reductase; part of the gene cluster that mediates the biosynthesis of a tyrosine-derived cytochalasan acting as a fungal signal recognized by resistant rice plants and leads to avirulence in Pi33 resistant rice cultivars. The first step in the pathway is catalyzed by the hybrid PKS-NRPS ACE1, assisted by the enoyl reductase RAP1, that are responsible for fusion of the tyrosine precursor and the polyketide backbone. The polyketide synthase module (PKS) of ACE1 is responsible for the synthesis of the polyketide backbone and the downstream nonribosomal peptide synthetase (NRPS) amidates the carboxyl end of the polyketide with the tyrosine precursor. Because ACE1 lacks a designated enoylreductase (ER) domain, the required activity is provided the enoyl reductase RAP1. Reduction by the hydrolyase ORFZ, followed by dehydration and intra-molecular Diels-Alder cyclization by the Diels-Alderase ORF3 then yield the required isoindolone-fused macrocycle. A number of oxidative steps catalyzed by the tailoring enzymes identified within the cluster, including cytochrome P450 monooxygenases CYP1 to CYP4, the FAD-linked oxidoreductase OXR2 and the short-chain dehydrogenase/reductase OXR1, are further required to afford the final cytochalasans that confer avirulence and which have still to be identified. The monooxygenase CYP1 has been shown to be a site-selective C-18 hydroxylase whereas the function of CYP3 is the site-selective epoxidation of the C-6/C-7 olefin that is present in some intermediate compounds. Finally, SYN2 and RAP2 are not required for avirulence in Pi33 resistant rice cultivars. In Pyricularia oryzae (strain 70-15 / ATCC MYA-4617 / FGSC 8958) (Rice blast fungus), this protein is Trans-enoyl reductase RAP1.